We begin with the raw amino-acid sequence, 247 residues long: uncharacterized protein (247 aa).

The 146-residue stretch at 102–247 (RSIMSRTNDN…ISEHHYRIKR (146 aa)) folds into the N-acetyltransferase domain.

This sequence belongs to the acetyltransferase family.

This is an uncharacterized protein from Bacillus subtilis (strain 168).